A 99-amino-acid polypeptide reads, in one-letter code: Transcriptional repressor PagR (99 aa).

The 91-residue stretch at 9-99 (IEYMSLEDDA…GIIKLLNPIQ (91 aa)) folds into the HTH arsR-type domain. The H-T-H motif DNA-binding region spans 43-62 (NVTQIIQILKLPQSTVSQHL).

In terms of biological role, represses the expression of the pagA and atxA genes. The protein is Transcriptional repressor PagR (pagR) of Bacillus anthracis.